Here is a 1352-residue protein sequence, read N- to C-terminus: DNA-directed RNA polymerase subunit beta (1352 aa).

The protein belongs to the RNA polymerase beta chain family. The RNAP catalytic core consists of 2 alpha, 1 beta, 1 beta' and 1 omega subunit. When a sigma factor is associated with the core the holoenzyme is formed, which can initiate transcription.

It carries out the reaction RNA(n) + a ribonucleoside 5'-triphosphate = RNA(n+1) + diphosphate. Its function is as follows. DNA-dependent RNA polymerase catalyzes the transcription of DNA into RNA using the four ribonucleoside triphosphates as substrates. The chain is DNA-directed RNA polymerase subunit beta from Hydrogenovibrio crunogenus (strain DSM 25203 / XCL-2) (Thiomicrospira crunogena).